Here is a 358-residue protein sequence, read N- to C-terminus: Dynein axonemal assembly factor 10 (358 aa).

WD repeat units follow at residues Glu-64–Tyr-106, Asn-116–Ala-155, Glu-163–Glu-206, Asn-208–Gly-250, Ala-258–Arg-298, and Leu-320–Leu-358.

In terms of assembly, interacts with PIH1D1; the interaction associates DNAAF10 with the R2TP complex. Interacts with several dynein axonemal assembly factors.

The protein resides in the dynein axonemal particle. In terms of biological role, key assembly factor specifically required for the stability of axonemal dynein heavy chains in cytoplasm. The chain is Dynein axonemal assembly factor 10 (dnaaf10) from Xenopus tropicalis (Western clawed frog).